Here is a 348-residue protein sequence, read N- to C-terminus: Heat-inducible transcription repressor HrcA (348 aa).

Belongs to the HrcA family.

Its function is as follows. Negative regulator of class I heat shock genes (grpE-dnaK-dnaJ and groELS operons). Prevents heat-shock induction of these operons. This Ruminiclostridium cellulolyticum (strain ATCC 35319 / DSM 5812 / JCM 6584 / H10) (Clostridium cellulolyticum) protein is Heat-inducible transcription repressor HrcA.